The chain runs to 374 residues: Peroxisome biogenesis factor 10 (374 aa).

Polar residues-rich tracts occupy residues 1-11 (MSNVQSQSNSH) and 18-31 (VNRS…QQIR). At 1–82 (MSNVQSQSNS…NSNLYPSYAD (82 aa)) the chain is on the peroxisomal matrix side. Residues 1 to 82 (MSNVQSQSNS…NSNLYPSYAD (82 aa)) form a disordered region. A compositionally biased stretch (low complexity) spans 35–76 (PTNNNNNNNNNSINNINNNTQRQPLNNNNNNNNNINRNNSNL). A helical membrane pass occupies residues 83-112 (QPDILRSSQKDEYYKKLFEDQCFEMLTRIT). Position 113 (G113) is a topological domain, cytoplasmic. Residues 114 to 135 (PRFIMNRQSESKLLANTIYYLL) traverse the membrane as a helical segment. Over 136 to 165 (TTMIGSQTLGEEYCNLRKIKDKTFSIPSIP) the chain is Peroxisomal matrix. The helical transmembrane segment at 166-181 (DRIKLYFFHLLAPYLI) threads the bilayer. Residues 182-192 (KKSLPKLFQRH) lie on the Cytoplasmic side of the membrane. A helical membrane pass occupies residues 193–216 (PKLYILKEIFPKFERLHLALFYFN). The Peroxisomal matrix segment spans residues 217-243 (GSYFEFSKRLSDIRYIFNRKIDQKRPK). Residues 244-263 (YDILGLLIIIQILLSTFMYL) form a helical membrane-spanning segment. The Cytoplasmic portion of the chain corresponds to 264-374 (KENSFFLKQQ…IRTCVPLYNY (111 aa)). Zn(2+)-binding residues include C322, C325, C337, H339, C342, C345, C356, and C359. The RING-type zinc-finger motif lies at 322 to 360 (CTLCLEVRTHTTATICGHLFCWHCITEWCNNKEQCPVCR).

Belongs to the pex2/pex10/pex12 family. In terms of assembly, component of the PEX2-PEX10-PEX12 retrotranslocation channel.

It is found in the peroxisome membrane. The enzyme catalyses S-ubiquitinyl-[E2 ubiquitin-conjugating enzyme]-L-cysteine + [acceptor protein]-L-lysine = [E2 ubiquitin-conjugating enzyme]-L-cysteine + N(6)-ubiquitinyl-[acceptor protein]-L-lysine.. The protein operates within protein modification; protein ubiquitination. With respect to regulation, the E3 ubiquitin-protein ligase activity is stimulated by PEX12. Its function is as follows. E3 ubiquitin-protein ligase component of a retrotranslocation channel required for peroxisome organization by mediating export of the PEX5 receptor from peroxisomes to the cytosol, thereby promoting PEX5 recycling. The retrotranslocation channel is composed of PEX2, PEX10 and PEX12; each subunit contributing transmembrane segments that coassemble into an open channel that specifically allows the passage of PEX5 through the peroxisomal membrane. PEX10 also regulates PEX5 recycling by acting as a E3 ubiquitin-protein ligase. When PEX5 recycling is compromised, PEX10 catalyzes polyubiquitination of PEX5 during its passage through the retrotranslocation channel, leading to its degradation. This chain is Peroxisome biogenesis factor 10 (pex10), found in Dictyostelium discoideum (Social amoeba).